The following is a 1165-amino-acid chain: DNA-directed RNA polymerase subunit beta' (1165 aa).

Zn(2+)-binding residues include Cys60, Cys62, Cys75, and Cys78. Asp449, Asp451, and Asp453 together coordinate Mg(2+). Positions 794, 868, 875, and 878 each coordinate Zn(2+).

The protein belongs to the RNA polymerase beta' chain family. The RNAP catalytic core consists of 2 alpha, 1 beta, 1 beta' and 1 omega subunit. When a sigma factor is associated with the core the holoenzyme is formed, which can initiate transcription. Mg(2+) serves as cofactor. It depends on Zn(2+) as a cofactor.

The catalysed reaction is RNA(n) + a ribonucleoside 5'-triphosphate = RNA(n+1) + diphosphate. Functionally, DNA-dependent RNA polymerase catalyzes the transcription of DNA into RNA using the four ribonucleoside triphosphates as substrates. In Acetivibrio thermocellus (strain ATCC 27405 / DSM 1237 / JCM 9322 / NBRC 103400 / NCIMB 10682 / NRRL B-4536 / VPI 7372) (Clostridium thermocellum), this protein is DNA-directed RNA polymerase subunit beta'.